The chain runs to 183 residues: Small ribosomal subunit protein uS4c (183 aa).

Residues 82–143 (MRLDNILFRL…KQRSKALIQN (62 aa)) form the S4 RNA-binding domain.

This sequence belongs to the universal ribosomal protein uS4 family. As to quaternary structure, part of the 30S ribosomal subunit. Contacts protein S5. The interaction surface between S4 and S5 is involved in control of translational fidelity.

The protein localises to the plastid. It localises to the chloroplast. One of the primary rRNA binding proteins, it binds directly to 16S rRNA where it nucleates assembly of the body of the 30S subunit. Its function is as follows. With S5 and S12 plays an important role in translational accuracy. The protein is Small ribosomal subunit protein uS4c (rps4) of Aristea capitata.